Reading from the N-terminus, the 179-residue chain is Large ribosomal subunit protein uL6 (179 aa).

The tract at residues R151–K179 is disordered. Positions K152–R169 are enriched in basic and acidic residues. Over residues R170 to K179 the composition is skewed to basic residues.

This sequence belongs to the universal ribosomal protein uL6 family. Part of the 50S ribosomal subunit.

In terms of biological role, this protein binds to the 23S rRNA, and is important in its secondary structure. It is located near the subunit interface in the base of the L7/L12 stalk, and near the tRNA binding site of the peptidyltransferase center. In Nitratidesulfovibrio vulgaris (strain ATCC 29579 / DSM 644 / CCUG 34227 / NCIMB 8303 / VKM B-1760 / Hildenborough) (Desulfovibrio vulgaris), this protein is Large ribosomal subunit protein uL6.